The chain runs to 202 residues: LexA repressor (202 aa).

The H-T-H motif DNA-binding region spans 32-52 (RAEVCSAFGFKSPNAAETHLR). Active-site for autocatalytic cleavage activity residues include Ser121 and Lys158.

This sequence belongs to the peptidase S24 family. In terms of assembly, homodimer.

It carries out the reaction Hydrolysis of Ala-|-Gly bond in repressor LexA.. In terms of biological role, represses a number of genes involved in the response to DNA damage (SOS response), including recA and lexA. In the presence of single-stranded DNA, RecA interacts with LexA causing an autocatalytic cleavage which disrupts the DNA-binding part of LexA, leading to derepression of the SOS regulon and eventually DNA repair. The protein is LexA repressor of Azoarcus sp. (strain BH72).